A 300-amino-acid chain; its full sequence is Ribosomal protein bS6--L-glutamate ligase (300 aa).

One can recognise an ATP-grasp domain in the interval 104–287 (MQLLARQGID…IAGKMIRWIE (184 aa)). ATP contacts are provided by residues Lys141, 178–179 (EY), Asp187, and 211–213 (RSN). 3 residues coordinate Mg(2+): Asp248, Glu260, and Asn262. Positions 248, 260, and 262 each coordinate Mn(2+).

It belongs to the RimK family. Mg(2+) serves as cofactor. It depends on Mn(2+) as a cofactor.

Its function is as follows. An L-glutamate ligase that catalyzes the ATP-dependent post-translational addition of glutamate residues to the C-terminus of ribosomal protein bS6 (RpsF). Is also able to catalyze the synthesis of poly-alpha-glutamate in vitro, via ATP hydrolysis from unprotected glutamate as substrate. The number of glutamate residues added to either RpsF or to poly-alpha-glutamate changes with pH. This Shigella dysenteriae serotype 1 (strain Sd197) protein is Ribosomal protein bS6--L-glutamate ligase.